Here is a 437-residue protein sequence, read N- to C-terminus: Enolase (437 aa).

Q162 serves as a coordination point for (2R)-2-phosphoglycerate. E204 acts as the Proton donor in catalysis. D251, E297, and D324 together coordinate Mg(2+). (2R)-2-phosphoglycerate contacts are provided by K349, R378, S379, and K400. The Proton acceptor role is filled by K349.

The protein belongs to the enolase family. Requires Mg(2+) as cofactor.

The protein resides in the cytoplasm. Its subcellular location is the secreted. It localises to the cell surface. It carries out the reaction (2R)-2-phosphoglycerate = phosphoenolpyruvate + H2O. It functions in the pathway carbohydrate degradation; glycolysis; pyruvate from D-glyceraldehyde 3-phosphate: step 4/5. Functionally, catalyzes the reversible conversion of 2-phosphoglycerate (2-PG) into phosphoenolpyruvate (PEP). It is essential for the degradation of carbohydrates via glycolysis. In Chlorobium chlorochromatii (strain CaD3), this protein is Enolase.